The chain runs to 255 residues: Diphthine synthase (255 aa).

S-adenosyl-L-methionine-binding positions include Leu9, Asp85, Val88, 113 to 114 (SI), Leu164, Ala207, and His232.

Belongs to the diphthine synthase family. As to quaternary structure, homodimer.

The enzyme catalyses 2-[(3S)-amino-3-carboxypropyl]-L-histidyl-[translation elongation factor 2] + 3 S-adenosyl-L-methionine = diphthine-[translation elongation factor 2] + 3 S-adenosyl-L-homocysteine + 3 H(+). Its pathway is protein modification; peptidyl-diphthamide biosynthesis. In terms of biological role, S-adenosyl-L-methionine-dependent methyltransferase that catalyzes the trimethylation of the amino group of the modified target histidine residue in translation elongation factor 2 (EF-2), to form an intermediate called diphthine. The three successive methylation reactions represent the second step of diphthamide biosynthesis. The protein is Diphthine synthase of Methanococcus maripaludis (strain C6 / ATCC BAA-1332).